The chain runs to 288 residues: MKIDIVSVFPEYFEVMNLSLMGKAQAKGLLEIKAHNLRDWTHDVHHSVDDTPVGGGAGMVMKPEVWSECLDELLGFSQPSAATDAVDTSDPGDSAAPDSSAPSGAPVLIFPNPSAPLFTQRDATELSHADHLLFGCGRYEGYDARIPDYYRAQGVDVREYSIGDYVLNGGEVAVSVMLEAITRLMPGFMGNPDSIVEESYTGEGALLEHRQYTKPAVWRGIAVPDVLLSGDHGKVDRFRRDEALARTAEIRPDLIAALDCKALDKADRKTLMALGWEVSAAHPRRLAD.

The segment at 82–105 (ATDAVDTSDPGDSAAPDSSAPSGA) is disordered. The segment covering 89–105 (SDPGDSAAPDSSAPSGA) has biased composition (low complexity). S-adenosyl-L-methionine-binding positions include Gly-137 and 162 to 167 (IGDYVL).

It belongs to the RNA methyltransferase TrmD family. As to quaternary structure, homodimer.

It is found in the cytoplasm. It catalyses the reaction guanosine(37) in tRNA + S-adenosyl-L-methionine = N(1)-methylguanosine(37) in tRNA + S-adenosyl-L-homocysteine + H(+). Specifically methylates guanosine-37 in various tRNAs. In Bifidobacterium longum (strain DJO10A), this protein is tRNA (guanine-N(1)-)-methyltransferase.